The sequence spans 274 residues: S-methyl-5'-thioadenosine phosphorylase (274 aa).

Phosphate-binding positions include Ser20, 62–63, and 95–96; these read RH and SA. Residue Met194 coordinates substrate. Position 195 (Thr195) interacts with phosphate. 218 to 220 contacts substrate; that stretch reads DYD.

This sequence belongs to the PNP/MTAP phosphorylase family. MTAP subfamily. Homohexamer. Dimer of a homotrimer.

It carries out the reaction S-methyl-5'-thioadenosine + phosphate = 5-(methylsulfanyl)-alpha-D-ribose 1-phosphate + adenine. Its pathway is amino-acid biosynthesis; L-methionine biosynthesis via salvage pathway; S-methyl-5-thio-alpha-D-ribose 1-phosphate from S-methyl-5'-thioadenosine (phosphorylase route): step 1/1. In terms of biological role, catalyzes the reversible phosphorylation of S-methyl-5'-thioadenosine (MTA) to adenine and 5-methylthioribose-1-phosphate. Involved in the breakdown of MTA, a major by-product of polyamine biosynthesis. Responsible for the first step in the methionine salvage pathway after MTA has been generated from S-adenosylmethionine. Has broad substrate specificity with 6-aminopurine nucleosides as preferred substrates. In Hyperthermus butylicus (strain DSM 5456 / JCM 9403 / PLM1-5), this protein is S-methyl-5'-thioadenosine phosphorylase.